The sequence spans 103 residues: Small ribosomal subunit protein bS6c (103 aa).

It belongs to the bacterial ribosomal protein bS6 family.

It is found in the plastid. It localises to the chloroplast. Binds together with bS18 to 16S ribosomal RNA. The sequence is that of Small ribosomal subunit protein bS6c from Gracilaria tenuistipitata var. liui (Red alga).